The primary structure comprises 422 residues: Glucosylglycerol-phosphate phosphatase (422 aa).

D403 functions as the Proton donor in the catalytic mechanism.

The protein belongs to the histidine acid phosphatase family. Monomer. Interacts with GGPS.

It carries out the reaction 2-O-(alpha-D-glucopyranosyl)-sn-glycerol 3-phosphate + H2O = 2-O-(alpha-D-glucopyranosyl)glycerol + phosphate. Functionally, phosphorylates glucosylglycerol-phosphate the precursor of the osmoprotectant glucosylglycerol necessary for salt adaptation of Synechocystis. This chain is Glucosylglycerol-phosphate phosphatase (stpA), found in Synechocystis sp. (strain ATCC 27184 / PCC 6803 / Kazusa).